A 319-amino-acid polypeptide reads, in one-letter code: Type II methyltransferase M.RsrI (319 aa).

The segment covering 1-10 (MANRSHHNAG) has biased composition (basic residues). Residues 1-32 (MANRSHHNAGHRAMNALRKSGQKHSSESQLGS) are disordered.

It belongs to the N(4)/N(6)-methyltransferase family.

The catalysed reaction is a 2'-deoxyadenosine in DNA + S-adenosyl-L-methionine = an N(6)-methyl-2'-deoxyadenosine in DNA + S-adenosyl-L-homocysteine + H(+). With respect to regulation, strongly inhibited by N-ethylmaleimide, inactivated by MgCl(2) or MgSO(4). In terms of biological role, a beta subtype methylase, recognizes the double-stranded sequence 5'-GAATTC-3', methylates A-3 on both strands, and protects the DNA from cleavage by the RsrI endonuclease. In Cereibacter sphaeroides (Rhodobacter sphaeroides), this protein is Type II methyltransferase M.RsrI.